We begin with the raw amino-acid sequence, 430 residues long: 26S protease regulatory subunit 6A (430 aa).

An ATP-binding site is contributed by 218–225 (GPPGTGKT).

The protein belongs to the AAA ATPase family. As to quaternary structure, component of the 19S proteasome regulatory particle complex. The 26S proteasome consists of a 20S core particle (CP) and two 19S regulatory subunits (RP). The regulatory particle is made of a lid composed of 9 subunits, a base containing 6 ATPases including the PSMC3 homolog rpt-5 and few additional components.

The protein localises to the cytoplasm. It is found in the nucleus. Functionally, component of the 26S proteasome, a multiprotein complex involved in the ATP-dependent degradation of ubiquitinated proteins. This complex plays a key role in the maintenance of protein homeostasis by removing misfolded or damaged proteins, which could impair cellular functions, and by removing proteins whose functions are no longer required. Therefore, the proteasome participates in numerous cellular processes, including cell cycle progression, apoptosis, or DNA damage repair. Belongs to the heterohexameric ring of AAA (ATPases associated with diverse cellular activities) proteins that unfolds ubiquitinated target proteins that are concurrently translocated into a proteolytic chamber and degraded into peptides. This Caenorhabditis elegans protein is 26S protease regulatory subunit 6A.